A 114-amino-acid chain; its full sequence is Adapter SH3BGRL (114 aa).

Residues 13–50 (STAIKKKQQDVLGFLEANKIGFEEKDIAANEENRKWMR) are required for interaction with HER2. The tract at residues 54 to 71 (PENSRPATGYPLPPQIFN) is required for interaction with PFN1, HER2, and ATG12. The short motif at 61-67 (TGYPLPP) is the SH3-binding element.

This sequence belongs to the SH3BGR family. Monomer. Interacts with PFN1/Profilin-1. Interacts with ERBB2. Interacts with ATG12. Interacts with BECN1. Interacts with translating ribosomes. Ubiquitous.

It is found in the cytoplasm. The protein localises to the cytosol. The protein resides in the cell membrane. Appears to function as an adapter protein that bridges proteins together or proteins with mRNAs. May function as a ubiquitin ligase-substrate adapter. Additionally, associates with translating cytoplasmic ribosomes and may promote the expression of specific mRNAs. In Homo sapiens (Human), this protein is Adapter SH3BGRL.